Consider the following 560-residue polypeptide: MAKLLSFSDESRGALEKGVNNLANALKVTIGPKGRNVVIEKKFGAPDIVNDGVTIAKEIDLEDPFENIGAKLIEQVASKTKEKAGDGTTTATVLAQFMVQEGLRNTAAGASPIELRRGMEKAVAQIVDDLKKKSKSVSGDAIKQVATVSAGGDEEIGSMIADAIDKVSFDGVITVEESKSLATELDITEGMAFDRGYSSPYFVTDEDRLICEFENPSILITDKKISSIADLIPVLETVQKNGTPLIILAEEVEGEALATLVVNKNRGVLQVAAVRAPSFGERRKAALGDIAVLTGGTLISEDKAMSLEKVQISDLGQARRVTITKDSTTIVANEAQNTELSNRIASIKRELEETDSEYDQEKLNERIAKLAGGVAVIKVGAPTETELKNRKLRIEDALNATRAAIEEGIVAGGGTTLLELSEGLGDLAKKLEGDQKTGVEIIKRALTAPTKQIAINAGFNGDVVVSDIKRLGKGFNAQTGEYEDLLEAGILDASKVIRLALQDAVSIASLLITTEVVIADKPEPPSAPGAEGGDPMGGMGGMGGMGGMGGMGGMGMPGMM.

ATP contacts are provided by residues 29-32 (TIGP), 86-90 (DGTTT), Gly-413, and Asp-492. Positions 520-542 (DKPEPPSAPGAEGGDPMGGMGGM) are disordered. Residues 530–542 (AEGGDPMGGMGGM) show a composition bias toward gly residues.

Belongs to the chaperonin (HSP60) family. As to quaternary structure, forms a cylinder of 14 subunits composed of two heptameric rings stacked back-to-back. Interacts with the co-chaperonin GroES.

The protein localises to the cytoplasm. It catalyses the reaction ATP + H2O + a folded polypeptide = ADP + phosphate + an unfolded polypeptide.. In terms of biological role, together with its co-chaperonin GroES, plays an essential role in assisting protein folding. The GroEL-GroES system forms a nano-cage that allows encapsulation of the non-native substrate proteins and provides a physical environment optimized to promote and accelerate protein folding. In Prochlorococcus marinus (strain NATL2A), this protein is Chaperonin GroEL 2.